The sequence spans 367 residues: MAFSTNGSEEIELYHAQIHLYKHVYNFVSSMALKSAMELGIADVIHNHGKPITLPELASALKLHPSKVGILYRFLRLLTHNGFFAKTTVPSQNGKDGEEEEETAYALTPPSKLLVKGKPTCLASIVRGALHPSSLDMWRSSEKWFKEDKELTLFESATGESFWDFLNKDSESGTLSMFQEAMAADSQMFKLALKECRHVFEGLESLVDVGGGTGGVTKLIHEEFPHLKCTVFDQPQVVGNLSGNENLKFVGGDMFKSIPPADAVLLKWVLHDWNDELSLKILKNSKEAISGKGKEGKVIIIDISIDEASGDRELTELQLDYDLVMLTMFNGKEREKKEWEKLISDAGFSSYKITPICGFKSLIEVFP.

Residues 209–212 (VGGG), Asp233, 233–234 (DQ), 253–254 (DM), and Lys267 contribute to the S-adenosyl-L-methionine site. Catalysis depends on His271, which acts as the Proton acceptor.

Belongs to the class I-like SAM-binding methyltransferase superfamily. Cation-independent O-methyltransferase family. COMT subfamily.

The catalysed reaction is a 4'-hydroxyisoflavone + S-adenosyl-L-methionine = a 4'-methoxyisoflavone + S-adenosyl-L-homocysteine + H(+). It catalyses the reaction (2R,3S)-2,4',7-trihydroxyisoflavanone + S-adenosyl-L-methionine = (2R,3S)-2,7-dihydroxy-4'-methoxyisoflavanone + S-adenosyl-L-homocysteine + H(+). In terms of biological role, 2-hydroxyisoflavanone 4'-O-methyltransferase involved in the biosynthesis of formononetin. Can use 2,7,4'-trihydroxyisoflavanone, (+)-6a-hydroxymaackiain or medicarpin as substrate, but not daidzein or (-)-6a-hydroxymaackiain. The sequence is that of Isoflavone 4'-O-methyltransferase (HI4'OMT) from Glycyrrhiza echinata (Licorice).